We begin with the raw amino-acid sequence, 137 residues long: Cellular retinoic acid-binding protein 1 (137 aa).

The short motif at 21 to 31 is the Nuclear localization signal element; it reads KALGVNAMLRK. An all-trans-retinoate-binding site is contributed by 132-134; that stretch reads RIY.

The protein belongs to the calycin superfamily. Fatty-acid binding protein (FABP) family.

It is found in the cytoplasm. Functionally, cytosolic CRABPs may regulate the access of retinoic acid to the nuclear retinoic acid receptors. The sequence is that of Cellular retinoic acid-binding protein 1 (Crabp1) from Mus musculus (Mouse).